The sequence spans 460 residues: tRNA modification GTPase MnmE (460 aa).

(6S)-5-formyl-5,6,7,8-tetrahydrofolate contacts are provided by Arg-29, Glu-91, and Arg-131. One can recognise a TrmE-type G domain in the interval 226–383 (GLRVALVGRP…LVQAVLERCG (158 aa)). Residue Asn-236 coordinates K(+). GTP is bound by residues 236-241 (NVGKSS), 255-261 (TDLPGTT), and 280-283 (DTAG). Mg(2+) is bound at residue Ser-240. Residues Thr-255, Leu-257, and Thr-260 each contribute to the K(+) site. Thr-261 is a Mg(2+) binding site. Position 460 (Lys-460) interacts with (6S)-5-formyl-5,6,7,8-tetrahydrofolate.

Belongs to the TRAFAC class TrmE-Era-EngA-EngB-Septin-like GTPase superfamily. TrmE GTPase family. As to quaternary structure, homodimer. Heterotetramer of two MnmE and two MnmG subunits. Requires K(+) as cofactor.

It is found in the cytoplasm. Its function is as follows. Exhibits a very high intrinsic GTPase hydrolysis rate. Involved in the addition of a carboxymethylaminomethyl (cmnm) group at the wobble position (U34) of certain tRNAs, forming tRNA-cmnm(5)s(2)U34. This is tRNA modification GTPase MnmE from Synechococcus sp. (strain WH7803).